The primary structure comprises 186 residues: Lumazine protein (186 aa).

2 Lumazine-binding repeats span residues 1 to 96 (MFRG…VGRG) and 97 to 186 (GLTG…LNEW).

The cofactor is 6,7-dimethyl-8-(1-D-ribityl)lumazine.

Its function is as follows. Antenna protein that modulates the color of the bioluminescence emission of the luciferase. In the presence of LumP, luciferase emission is shifted to higher energy values (shorter wavelength). This is Lumazine protein (lumP) from Photobacterium leiognathi.